Here is a 67-residue protein sequence, read N- to C-terminus: Disintegrin EC3A (67 aa).

One can recognise a Disintegrin domain in the interval 1–65; it reads NSVHPCCDPV…DCPRNRYKGK (65 aa). 4 cysteine pairs are disulfide-bonded: cysteine 6/cysteine 29, cysteine 20/cysteine 26, cysteine 25/cysteine 50, and cysteine 38/cysteine 57. Residues 42–44 carry the Cell attachment site; atypical (VGD) motif; the sequence is VGD.

It belongs to the venom metalloproteinase (M12B) family. P-II subfamily. P-IIe sub-subfamily. As to quaternary structure, heterodimer with EC3B; disulfide-linked. Expressed by the venom gland.

The protein localises to the secreted. Inhibits adhesion of cells expressing alpha-4/beta-1 (ITGA4/ITGB1) and alpha-4/beta-7 (ITGA4/ITGB7) integrins to the natural ligands vascular cell adhesion molecule 1 (VCAM-1) and mucosal addressin cell adhesion molecule 1 (MADCAM-1). It is also a weaker inhibitor of alpha-5/beta-1 (ITGA5/ITGB1) and alpha-2b/beta-3 (ITGA2B/ITGB3) integrins. The inhibitory activity of EC3 towards alpha-4 integrins is associated with the MLD sequence of EC3B subunit. The ability of EC3 to inhibit ITGA5/ITGB1 resides in both subunits A and B. The chain is Disintegrin EC3A from Echis carinatus (Saw-scaled viper).